Reading from the N-terminus, the 123-residue chain is uncharacterized protein (123 aa).

The disordered stretch occupies residues 76–97 (ENNKRKKKSEGERVRSPRTFRG).

This is an uncharacterized protein from Saccharomyces cerevisiae (strain ATCC 204508 / S288c) (Baker's yeast).